The chain runs to 143 residues: Large ribosomal subunit protein uL15 (143 aa).

The disordered stretch occupies residues 1 to 59 (MELNGIKPADGAKHYKRRVGRGIGSGIGKTAGRGHKGQKSRAGGYHKVGFEGGQMPMQR). Gly residues predominate over residues 21 to 31 (RGIGSGIGKTA).

It belongs to the universal ribosomal protein uL15 family. In terms of assembly, part of the 50S ribosomal subunit.

Binds to the 23S rRNA. The polypeptide is Large ribosomal subunit protein uL15 (Albidiferax ferrireducens (strain ATCC BAA-621 / DSM 15236 / T118) (Rhodoferax ferrireducens)).